Reading from the N-terminus, the 122-residue chain is Small ribosomal subunit protein bS6 (122 aa).

The interval 99-122 (PSPMMKEVAREEAKKAAAQTEQAA) is disordered.

This sequence belongs to the bacterial ribosomal protein bS6 family.

Functionally, binds together with bS18 to 16S ribosomal RNA. This is Small ribosomal subunit protein bS6 from Ralstonia pickettii (strain 12J).